A 731-amino-acid chain; its full sequence is SUN domain-containing protein 2 (731 aa).

Disordered regions lie at residues 1 to 69 (MSRR…SHTS) and 106 to 142 (SGDL…FGSS). An LMNA-binding region spans residues 1–128 (MSRRSQRLTR…GSESSKANGL (128 aa)). Residues 1–226 (MSRRSQRLTR…SRHFSLNLKS (226 aa)) lie on the Nuclear side of the membrane. Residue Ser12 is modified to Phosphoserine. Positions 18-33 (GGSSSSGASSVAGSQG) are enriched in low complexity. Phosphoserine is present on residues Ser39 and Ser55. Thr117 bears the Phosphothreonine mark. Phosphoserine is present on residues Ser120, Ser123, and Ser147. A helical membrane pass occupies residues 227–247 (FLWFLLLLLLLTGLTYGAWHF). Residues 248 to 731 (YPLGLQTLQP…RFRVHGEPAH (484 aa)) are Perinuclear space-facing. Coiled-coil stretches lie at residues 396-452 (QESE…VADE) and 486-519 (RSGL…KSAR). Residues 521-731 (AAASLGQILQ…RFRVHGEPAH (211 aa)) form a sufficient for interaction with SYNE1 and SYNE2 region. Positions 569–730 (GASVISTRCS…YRFRVHGEPA (162 aa)) constitute an SUN domain. Asn650 carries an N-linked (GlcNAc...) asparagine glycan.

As to quaternary structure, core component of the LINC complex which is composed of inner nuclear membrane SUN domain-containing proteins coupled to outer nuclear membrane KASH domain-containing nesprins. SUN and KASH domain-containing proteins seem to bind each other promiscuously; however, differentially expression of LINC complex constituents is giving rise to specific assemblies. At least SUN1/2-containing core LINC complexes are proposed to be hexameric composed of three protomers of each KASH and SUN domain-containing protein. Interacts with SYNE2; the SUN2:SYNE2/KASH2 LINC complex is a heterohexamer; the homotrimeric cloverleave-like conformation of the SUN domain is a prerequisite for LINC complex formation in which three separate SYNE2/KASH2 peptides bind at the interface of adjacent SUN domains. Component of a probable SUN2:KASH5 LINC complex. Interacts with SYNE1 and SYNE3; probably forming respective LINC complexes. Interacts with A-type lamin. Interaction with lamins B1 and C is hardly detectable. Interacts with EMD. Interacts with RAB5A. Interacts with TMEM43 and TMEM201. Interacts with IRAG2. Post-translationally, the disulfide bond with SYNE2 is required for stability of the SUN2:SYNE2/KASH2 LINC complex under tensile forces though not required for the interaction. The disulfide bond is proposed to be conserved in LINC complexes involved in force transmission. As to expression, highly expressed in heart, placenta and muscle.

It is found in the nucleus inner membrane. It localises to the nucleus envelope. Its subcellular location is the endosome membrane. Its function is as follows. As a component of the LINC (LInker of Nucleoskeleton and Cytoskeleton) complex, involved in the connection between the nuclear lamina and the cytoskeleton. The nucleocytoplasmic interactions established by the LINC complex play an important role in the transmission of mechanical forces across the nuclear envelope and in nuclear movement and positioning. Specifically, SYNE2 and SUN2 assemble in arrays of transmembrane actin-associated nuclear (TAN) lines which are bound to F-actin cables and couple the nucleus to retrograde actin flow during actin-dependent nuclear movement. Required for interkinetic nuclear migration (INM) and essential for nucleokinesis and centrosome-nucleus coupling during radial neuronal migration in the cerebral cortex and during glial migration. Required for nuclear migration in retinal photoreceptor progenitors implicating association with cytoplasmic dynein-dynactin and kinesin motor complexes, and probably B-type lamins; SUN1 and SUN2 seem to act redundantly. The SUN1/2:KASH5 LINC complex couples telomeres to microtubules during meiosis; SUN1 and SUN2 seem to act at least partial redundantly. Anchors chromosome movement in the prophase of meiosis and is involved in selective gene expression of coding and non-coding RNAs needed for gametogenesis. Required for telomere attachment to nuclear envelope and gametogenesis. May also function on endocytic vesicles as a receptor for Rab5-GDP and participate in the activation of Rab5. The sequence is that of SUN domain-containing protein 2 from Mus musculus (Mouse).